A 455-amino-acid chain; its full sequence is Beta-1,4-mannosyltransferase bre-3 (455 aa).

This sequence belongs to the glycosyltransferase 2 family.

The protein resides in the cytoplasm. It participates in protein modification; protein glycosylation. Its function is as follows. Glycosyltransferase with a proposed role in glycosphingolipid biosynthesis. Involved in susceptibility to pore-forming crystal toxins in conjunction with bre-1, bre-2 and bre-4. Involved in resistance to the nematotoxic C.cinerea galectin Cgl2. Has a role in determining brood size. This Caenorhabditis briggsae protein is Beta-1,4-mannosyltransferase bre-3.